Here is a 415-residue protein sequence, read N- to C-terminus: Peptide chain release factor subunit 1-2 (415 aa).

It belongs to the eukaryotic release factor 1 family. Heterodimer of two subunits, one of which binds GTP.

Its subcellular location is the cytoplasm. Functionally, directs the termination of nascent peptide synthesis (translation) in response to the termination codons UAA, UAG and UGA. The polypeptide is Peptide chain release factor subunit 1-2 (Methanosarcina acetivorans (strain ATCC 35395 / DSM 2834 / JCM 12185 / C2A)).